Here is a 208-residue protein sequence, read N- to C-terminus: NAD(P)H-quinone oxidoreductase subunit I (208 aa).

2 4Fe-4S ferredoxin-type domains span residues 55–84 (GRIH…VDWV) and 95–124 (RNYS…MTEE). [4Fe-4S] cluster is bound by residues cysteine 64, cysteine 67, cysteine 70, cysteine 74, cysteine 104, cysteine 107, cysteine 110, and cysteine 114.

This sequence belongs to the complex I 23 kDa subunit family. As to quaternary structure, NDH-1 is composed of at least 11 different subunits. It depends on [4Fe-4S] cluster as a cofactor.

The protein resides in the cellular thylakoid membrane. It catalyses the reaction a plastoquinone + NADH + (n+1) H(+)(in) = a plastoquinol + NAD(+) + n H(+)(out). The catalysed reaction is a plastoquinone + NADPH + (n+1) H(+)(in) = a plastoquinol + NADP(+) + n H(+)(out). In terms of biological role, NDH-1 shuttles electrons from an unknown electron donor, via FMN and iron-sulfur (Fe-S) centers, to quinones in the respiratory and/or the photosynthetic chain. The immediate electron acceptor for the enzyme in this species is believed to be plastoquinone. Couples the redox reaction to proton translocation, and thus conserves the redox energy in a proton gradient. The polypeptide is NAD(P)H-quinone oxidoreductase subunit I (Prochlorococcus marinus (strain MIT 9312)).